The following is a 696-amino-acid chain: Elongation factor G (696 aa).

Residues 8–290 (ERYRNIGIMA…AVLDYLPSPL (283 aa)) enclose the tr-type G domain. GTP contacts are provided by residues 17–24 (AHIDAGKT), 88–92 (DTPGH), and 142–145 (NKMD).

It belongs to the TRAFAC class translation factor GTPase superfamily. Classic translation factor GTPase family. EF-G/EF-2 subfamily.

The protein resides in the cytoplasm. In terms of biological role, catalyzes the GTP-dependent ribosomal translocation step during translation elongation. During this step, the ribosome changes from the pre-translocational (PRE) to the post-translocational (POST) state as the newly formed A-site-bound peptidyl-tRNA and P-site-bound deacylated tRNA move to the P and E sites, respectively. Catalyzes the coordinated movement of the two tRNA molecules, the mRNA and conformational changes in the ribosome. The chain is Elongation factor G from Nitrosomonas europaea (strain ATCC 19718 / CIP 103999 / KCTC 2705 / NBRC 14298).